Consider the following 476-residue polypeptide: Chromosomal replication initiator protein DnaA (476 aa).

The interval 1–75 (MLAPDTFWLA…TQMAENHFAR (75 aa)) is domain I, interacts with DnaA modulators. Residues 75-139 (RPVQLQLELA…AKEKQEKNPT (65 aa)) form a domain II region. A disordered region spans residues 110 to 141 (FDAPTESAQKAPKDTKDTKDAKEKQEKNPTRL). The segment covering 120–138 (APKDTKDTKDAKEKQEKNP) has biased composition (basic and acidic residues). A domain III, AAA+ region region spans residues 140–356 (RLNPSFTFNT…GALKRVVAYS (217 aa)). Gly-184, Gly-186, Lys-187, and Thr-188 together coordinate ATP. A domain IV, binds dsDNA region spans residues 357–476 (RFTGHALTLD…FNTLLHILRG (120 aa)).

The protein belongs to the DnaA family. In terms of assembly, oligomerizes as a right-handed, spiral filament on DNA at oriC.

The protein resides in the cytoplasm. Functionally, plays an essential role in the initiation and regulation of chromosomal replication. ATP-DnaA binds to the origin of replication (oriC) to initiate formation of the DNA replication initiation complex once per cell cycle. Binds the DnaA box (a 9 base pair repeat at the origin) and separates the double-stranded (ds)DNA. Forms a right-handed helical filament on oriC DNA; dsDNA binds to the exterior of the filament while single-stranded (ss)DNA is stabiized in the filament's interior. The ATP-DnaA-oriC complex binds and stabilizes one strand of the AT-rich DNA unwinding element (DUE), permitting loading of DNA polymerase. After initiation quickly degrades to an ADP-DnaA complex that is not apt for DNA replication. Binds acidic phospholipids. This chain is Chromosomal replication initiator protein DnaA, found in Nitrosospira multiformis (strain ATCC 25196 / NCIMB 11849 / C 71).